We begin with the raw amino-acid sequence, 282 residues long: Pantothenate synthetase (282 aa).

Residue 30–37 coordinates ATP; it reads MGYLHEGH. His37 functions as the Proton donor in the catalytic mechanism. Position 61 (Gln61) interacts with (R)-pantoate. Residue Gln61 coordinates beta-alanine. Residue 147 to 150 coordinates ATP; it reads GQKD. Position 153 (Gln153) interacts with (R)-pantoate. ATP contacts are provided by residues Val176 and 184–187; that span reads MSSR.

It belongs to the pantothenate synthetase family. In terms of assembly, homodimer.

The protein resides in the cytoplasm. The catalysed reaction is (R)-pantoate + beta-alanine + ATP = (R)-pantothenate + AMP + diphosphate + H(+). It functions in the pathway cofactor biosynthesis; (R)-pantothenate biosynthesis; (R)-pantothenate from (R)-pantoate and beta-alanine: step 1/1. Catalyzes the condensation of pantoate with beta-alanine in an ATP-dependent reaction via a pantoyl-adenylate intermediate. This chain is Pantothenate synthetase, found in Caldicellulosiruptor bescii (strain ATCC BAA-1888 / DSM 6725 / KCTC 15123 / Z-1320) (Anaerocellum thermophilum).